The following is a 195-amino-acid chain: Guanylate kinase (195 aa).

The Guanylate kinase-like domain maps to 7-186; it reads GVLLVLSSPS…SVEEISSILD (180 aa). Residue 14–21 participates in ATP binding; the sequence is SPSGAGKT.

It belongs to the guanylate kinase family.

It localises to the cytoplasm. It carries out the reaction GMP + ATP = GDP + ADP. In terms of biological role, essential for recycling GMP and indirectly, cGMP. This chain is Guanylate kinase, found in Wolbachia sp. subsp. Brugia malayi (strain TRS).